The chain runs to 583 residues: Aspartate--tRNA ligase (583 aa).

L-aspartate is bound at residue glutamate 174. Residues 198–201 (QITK) form an aspartate region. Residue arginine 220 participates in L-aspartate binding. ATP contacts are provided by residues 220-222 (RDE) and glutamine 229. Histidine 443 lines the L-aspartate pocket. Glutamate 477 is a binding site for ATP. Arginine 484 serves as a coordination point for L-aspartate. ATP is bound at residue 529–532 (GLDR).

This sequence belongs to the class-II aminoacyl-tRNA synthetase family. Type 1 subfamily. In terms of assembly, homodimer.

The protein localises to the cytoplasm. The enzyme catalyses tRNA(Asp) + L-aspartate + ATP = L-aspartyl-tRNA(Asp) + AMP + diphosphate. Its function is as follows. Catalyzes the attachment of L-aspartate to tRNA(Asp) in a two-step reaction: L-aspartate is first activated by ATP to form Asp-AMP and then transferred to the acceptor end of tRNA(Asp). In Streptococcus agalactiae serotype V (strain ATCC BAA-611 / 2603 V/R), this protein is Aspartate--tRNA ligase.